Reading from the N-terminus, the 495-residue chain is Probable cytochrome P450 513C1 (495 aa).

A helical transmembrane segment spans residues Met1 to Asn21. Cys441 contacts heme.

The protein belongs to the cytochrome P450 family. Heme is required as a cofactor.

It localises to the membrane. The polypeptide is Probable cytochrome P450 513C1 (cyp513C1) (Dictyostelium discoideum (Social amoeba)).